The chain runs to 382 residues: V-type proton ATPase subunit C 1 (382 aa).

The residue at position 2 (Thr-2) is an N-acetylthreonine.

It belongs to the V-ATPase C subunit family. As to quaternary structure, V-ATPase is a heteromultimeric enzyme made up of two complexes: the ATP-hydrolytic V1 complex and the proton translocation V0 complex. The V1 complex consists of three catalytic AB heterodimers that form a heterohexamer, three peripheral stalks each consisting of EG heterodimers, one central rotor including subunits D and F, and the regulatory subunits C and H. The proton translocation complex V0 consists of the proton transport subunit a, a ring of proteolipid subunits c9c'', rotary subunit d, subunits e and f, and the accessory subunits ATP6AP1/Ac45 and ATP6AP2/PRR.

The protein localises to the cytoplasmic vesicle. It is found in the secretory vesicle. It localises to the synaptic vesicle membrane. Its subcellular location is the clathrin-coated vesicle membrane. Subunit of the V1 complex of vacuolar(H+)-ATPase (V-ATPase), a multisubunit enzyme composed of a peripheral complex (V1) that hydrolyzes ATP and a membrane integral complex (V0) that translocates protons. V-ATPase is responsible for acidifying and maintaining the pH of intracellular compartments and in some cell types, is targeted to the plasma membrane, where it is responsible for acidifying the extracellular environment. Subunit C is necessary for the assembly of the catalytic sector of the enzyme and is likely to have a specific function in its catalytic activity. In Macaca fascicularis (Crab-eating macaque), this protein is V-type proton ATPase subunit C 1 (ATP6V1C1).